We begin with the raw amino-acid sequence, 309 residues long: Anamorsin (309 aa).

Positions 6–172 (ISPGQLVAVF…KPNFEVGSSS (167 aa)) are N-terminal SAM-like domain. Positions 173–222 (QLKLPNKKSSSVKPVVDPAAAKLWTLSANDMEDDSVDLIDSDELLDPEDL) are linker. 3 positions are modified to phosphoserine: S182, S183, and S213. Positions 235, 244, 247, and 249 each coordinate [2Fe-2S] cluster. The segment at 235-249 (CGEGKKRKACKNCTC) is fe-S binding site A. Residue S269 is modified to Phosphoserine. Residues C271, C274, C282, and C285 each contribute to the [4Fe-4S] cluster site. Short sequence motifs (cx2C motif) lie at residues 271–274 (CGNC) and 282–285 (CANC). A fe-S binding site B region spans residues 271 to 285 (CGNCYLGDAFRCANC). 2 positions are modified to phosphoserine: S302 and S304.

This sequence belongs to the anamorsin family. As to quaternary structure, monomer. Interacts with NDOR1. Interacts with CHCHD4. The cofactor is [2Fe-2S] cluster. Requires [4Fe-4S] cluster as cofactor.

The protein resides in the cytoplasm. The protein localises to the nucleus. It localises to the mitochondrion intermembrane space. Functionally, component of the cytosolic iron-sulfur (Fe-S) protein assembly (CIA) machinery required for the maturation of extramitochondrial Fe-S proteins. Part of an electron transfer chain functioning in an early step of cytosolic Fe-S biogenesis, facilitating the de novo assembly of a [4Fe-4S] cluster on the scaffold complex NUBP1-NUBP2. Electrons are transferred to CIAPIN1 from NADPH via the FAD- and FMN-containing protein NDOR1. NDOR1-CIAPIN1 are also required for the assembly of the diferric tyrosyl radical cofactor of ribonucleotide reductase (RNR), probably by providing electrons for reduction during radical cofactor maturation in the catalytic small subunit. Has anti-apoptotic effects in the cell. Involved in negative control of cell death upon cytokine withdrawal. Promotes development of hematopoietic cells. The sequence is that of Anamorsin from Mus musculus (Mouse).